A 320-amino-acid polypeptide reads, in one-letter code: Zygote arrest protein 1 (320 aa).

Disordered stretches follow at residues Glu-106 to Tyr-130 and Asp-155 to Ser-208. The 3CxxC-type zinc-finger motif lies at Lys-222–Gly-305.

It belongs to the ZAR1 family.

It localises to the cytoplasm. It is found in the cytoplasmic ribonucleoprotein granule. MRNA-binding protein required for maternal mRNA storage, translation and degradation during oocyte maturation. Probably promotes formation of some phase-separated membraneless compartment that stores maternal mRNAs in oocytes: acts by undergoing liquid-liquid phase separation upon binding to maternal mRNAs. Binds to the 3'-UTR of maternal mRNAs, inhibiting their translation. The protein is Zygote arrest protein 1 of Takifugu rubripes (Japanese pufferfish).